A 278-amino-acid chain; its full sequence is Large ribosomal subunit protein uL2 (278 aa).

Positions 224–262 (VMNPVDHPLGGGEGRTSGGRHPVTPWGKPTKGFKTRKTR) are disordered.

Belongs to the universal ribosomal protein uL2 family. In terms of assembly, part of the 50S ribosomal subunit. Forms a bridge to the 30S subunit in the 70S ribosome.

In terms of biological role, one of the primary rRNA binding proteins. Required for association of the 30S and 50S subunits to form the 70S ribosome, for tRNA binding and peptide bond formation. It has been suggested to have peptidyltransferase activity; this is somewhat controversial. Makes several contacts with the 16S rRNA in the 70S ribosome. This chain is Large ribosomal subunit protein uL2, found in Leptospira biflexa serovar Patoc (strain Patoc 1 / Ames).